The following is a 195-amino-acid chain: Shikimate kinase (195 aa).

33–38 provides a ligand contact to ATP; the sequence is GAGKTT. Residue Thr37 participates in Mg(2+) binding. Residues Asp55, Arg79, and Gly101 each coordinate substrate. Arg139 is a binding site for ATP. Arg158 contributes to the substrate binding site. Residue Arg175 participates in ATP binding.

The protein belongs to the shikimate kinase family. In terms of assembly, monomer. Mg(2+) is required as a cofactor.

Its subcellular location is the cytoplasm. The catalysed reaction is shikimate + ATP = 3-phosphoshikimate + ADP + H(+). It functions in the pathway metabolic intermediate biosynthesis; chorismate biosynthesis; chorismate from D-erythrose 4-phosphate and phosphoenolpyruvate: step 5/7. Its function is as follows. Catalyzes the specific phosphorylation of the 3-hydroxyl group of shikimic acid using ATP as a cosubstrate. This Nitrosospira multiformis (strain ATCC 25196 / NCIMB 11849 / C 71) protein is Shikimate kinase.